Here is a 224-residue protein sequence, read N- to C-terminus: MMLITTSHRPTRRTRSFGHDLERVFPNSLYMTRGKKTIQELLMEAYDRGYERLLIINVWKGNPLKMTFIKVHPDDWGYLGYLYLHGVKLQREMGFRGLNPIREDMPLVVTTAKRVGLDHLAFAQVFSELTTGKFVPRGDKSLLSIADKYNTDVLAVIERHPRGIVVNFYRLDVTKERAVGPLINVKIWIMEDGRRWDYKEAFGIKVKPRRKEGEAEEGARKDSH.

In terms of domain architecture, Brix spans 1 to 196 (MMLITTSHRP…IWIMEDGRRW (196 aa)).

Probably involved in the biogenesis of the ribosome. The polypeptide is Probable Brix domain-containing ribosomal biogenesis protein (Pyrococcus abyssi (strain GE5 / Orsay)).